A 603-amino-acid polypeptide reads, in one-letter code: Golgin subfamily A member 8B (603 aa).

4 disordered regions span residues 1–82 (MAEE…NSRS), 95–125 (LKQQ…ELEG), 398–419 (TSAE…ESSG), and 460–492 (PGDS…GAAG). Positions 46-66 (AASGGCHSSEASSSASSSLHA) are enriched in low complexity. The segment covering 69-82 (SPCQEQAAVLNSRS) has biased composition (polar residues). Coiled coils occupy residues 82 to 173 (SIKI…GELE) and 212 to 440 (LKGH…LELG). Residues 100 to 124 (KQVEHQLEEEKKANNEKQKAERELE) are compositionally biased toward basic and acidic residues. The segment covering 469–482 (PGGGHHQAGPGQGG) has biased composition (gly residues). Positions 491-603 (AGDGVAACGS…CWAWLPRRRR (113 aa)) are golgi-targeting domain.

It belongs to the GOLGA8 family. Highly expressed in brain, heart and kidney. Detected at lower levels in liver, thymus, spleen, lung and peripheral blood leukocytes.

The protein resides in the golgi apparatus. The protein localises to the golgi stack membrane. Its function is as follows. May be involved in maintaining Golgi structure. This is Golgin subfamily A member 8B (GOLGA8B) from Homo sapiens (Human).